Reading from the N-terminus, the 266-residue chain is Imidazole glycerol phosphate synthase subunit HisF (266 aa).

Residues aspartate 11 and aspartate 130 contribute to the active site.

Belongs to the HisA/HisF family. Heterodimer of HisH and HisF.

It localises to the cytoplasm. The enzyme catalyses 5-[(5-phospho-1-deoxy-D-ribulos-1-ylimino)methylamino]-1-(5-phospho-beta-D-ribosyl)imidazole-4-carboxamide + L-glutamine = D-erythro-1-(imidazol-4-yl)glycerol 3-phosphate + 5-amino-1-(5-phospho-beta-D-ribosyl)imidazole-4-carboxamide + L-glutamate + H(+). The protein operates within amino-acid biosynthesis; L-histidine biosynthesis; L-histidine from 5-phospho-alpha-D-ribose 1-diphosphate: step 5/9. IGPS catalyzes the conversion of PRFAR and glutamine to IGP, AICAR and glutamate. The HisF subunit catalyzes the cyclization activity that produces IGP and AICAR from PRFAR using the ammonia provided by the HisH subunit. The chain is Imidazole glycerol phosphate synthase subunit HisF from Albidiferax ferrireducens (strain ATCC BAA-621 / DSM 15236 / T118) (Rhodoferax ferrireducens).